Reading from the N-terminus, the 219-residue chain is Pyridoxine/pyridoxamine 5'-phosphate oxidase (219 aa).

Substrate-binding positions include 13-16 and Lys-76; that span reads RVEY. Residues 71–76, 86–87, Lys-93, and Gln-115 contribute to the FMN site; these read RSVLCK and FT. Residues Tyr-133, Arg-137, and Ser-141 each contribute to the substrate site. FMN contacts are provided by residues 150–151 and Trp-196; that span reads QS. Residue 202-204 coordinates substrate; that stretch reads RVH. An FMN-binding site is contributed by Arg-206.

Belongs to the pyridoxamine 5'-phosphate oxidase family. In terms of assembly, homodimer. The cofactor is FMN.

It catalyses the reaction pyridoxamine 5'-phosphate + O2 + H2O = pyridoxal 5'-phosphate + H2O2 + NH4(+). It carries out the reaction pyridoxine 5'-phosphate + O2 = pyridoxal 5'-phosphate + H2O2. It functions in the pathway cofactor metabolism; pyridoxal 5'-phosphate salvage; pyridoxal 5'-phosphate from pyridoxamine 5'-phosphate: step 1/1. The protein operates within cofactor metabolism; pyridoxal 5'-phosphate salvage; pyridoxal 5'-phosphate from pyridoxine 5'-phosphate: step 1/1. Catalyzes the oxidation of either pyridoxine 5'-phosphate (PNP) or pyridoxamine 5'-phosphate (PMP) into pyridoxal 5'-phosphate (PLP). The polypeptide is Pyridoxine/pyridoxamine 5'-phosphate oxidase (Mycobacterium leprae (strain TN)).